We begin with the raw amino-acid sequence, 131 residues long: Small ribosomal subunit protein bS6 (131 aa).

The interval 94-131 (DAVTEESQLAKNADEKRARKATTRRPDSNDDNDNHSDD) is disordered. The segment covering 117–131 (RRPDSNDDNDNHSDD) has biased composition (basic and acidic residues).

It belongs to the bacterial ribosomal protein bS6 family.

Binds together with bS18 to 16S ribosomal RNA. The polypeptide is Small ribosomal subunit protein bS6 (Psychrobacter cryohalolentis (strain ATCC BAA-1226 / DSM 17306 / VKM B-2378 / K5)).